The primary structure comprises 271 residues: Sulfur carrier protein FdhD (271 aa).

Cysteine 114 functions as the Cysteine persulfide intermediate in the catalytic mechanism.

It belongs to the FdhD family.

It is found in the cytoplasm. Required for formate dehydrogenase (FDH) activity. Acts as a sulfur carrier protein that transfers sulfur from IscS to the molybdenum cofactor prior to its insertion into FDH. The chain is Sulfur carrier protein FdhD from Agrobacterium fabrum (strain C58 / ATCC 33970) (Agrobacterium tumefaciens (strain C58)).